Here is a 574-residue protein sequence, read N- to C-terminus: ATP-dependent lipid A-core flippase (574 aa).

4 helical membrane passes run 11–31, 60–80, 156–176, and 244–264; these read LLSY…GFGI, WFPL…FMGG, YTNW…GVLV, and LNSP…VWLA. Positions 23–304 constitute an ABC transmembrane type-1 domain; the sequence is LLVLVGFGIN…LTDVNEKLQR (282 aa). The 236-residue stretch at 335-570 folds into the ABC transporter domain; the sequence is VRFDHVTLEY…QGAYFQLHQR (236 aa). Position 368-375 (368-375) interacts with ATP; the sequence is GRSGAGKT.

Belongs to the ABC transporter superfamily. Lipid exporter (TC 3.A.1.106) family. In terms of assembly, homodimer.

It localises to the cell inner membrane. The enzyme catalyses ATP + H2O + lipid A-core oligosaccharideSide 1 = ADP + phosphate + lipid A-core oligosaccharideSide 2.. Involved in lipopolysaccharide (LPS) biosynthesis. Translocates lipid A-core from the inner to the outer leaflet of the inner membrane. Transmembrane domains (TMD) form a pore in the inner membrane and the ATP-binding domain (NBD) is responsible for energy generation. In Acinetobacter baylyi (strain ATCC 33305 / BD413 / ADP1), this protein is ATP-dependent lipid A-core flippase.